The primary structure comprises 741 residues: Subtilisin-like protease SBT4.4 (741 aa).

Residues 1-24 (MAKGTTFIFLFSSLLVLSLSSVSA) form the signal peptide. The propeptide at 25 to 112 (DKDDHGDQQV…VFPSRKLKLQ (88 aa)) is activation peptide. Positions 34 to 111 (VYIVYLGSLP…SVFPSRKLKL (78 aa)) constitute an Inhibitor I9 domain. The Peptidase S8 domain maps to 116 to 589 (SWNFMGLKEG…SGHVDPIDAI (474 aa)). The Charge relay system role is filled by aspartate 144. N-linked (GlcNAc...) asparagine glycosylation is found at asparagine 175 and asparagine 195. Histidine 204 serves as the catalytic Charge relay system. Asparagine 227 and asparagine 357 each carry an N-linked (GlcNAc...) asparagine glycan. Residues 359–445 (TNYPLVYGKS…LSNDDYKSLV (87 aa)) form the PA domain. Asparagine 449 carries an N-linked (GlcNAc...) asparagine glycan. Serine 528 (charge relay system) is an active-site residue. N-linked (GlcNAc...) asparagine glycosylation is found at asparagine 565, asparagine 610, asparagine 623, and asparagine 654.

The protein belongs to the peptidase S8 family. Post-translationally, the C-terminal propeptide is autocleaved.

Its subcellular location is the secreted. In Arabidopsis thaliana (Mouse-ear cress), this protein is Subtilisin-like protease SBT4.4.